The sequence spans 277 residues: MRYWGKLLGLVLGVMYAPGVVGALLGLLVGHMVDRALGAKRRGFFADQQTRQSLFFRTTFQVMGHLTKAKGRVTEVDIQLASQLMDRMQLHGAARTAAQQAFREGKESHFPLRKALQEFRRVCFGRFDLIRIFLEIQLQAAFADGSLHPNERQVLYVIAEELGISRGQFDQFLRMFDGGRQFGGHGGWQGQQGGYSQSGYQRASQGPTLEDACKVLGVNSSDDSVAIKRAYRKLMGEHHPDKLVAKGLPPEMMEMAKQKAQEIQAAYDLIKREKGFK.

Residues 1–6 (MRYWGK) are Periplasmic-facing. The helical transmembrane segment at 7–31 (LLGLVLGVMYAPGVVGALLGLLVGH) threads the bilayer. Topologically, residues 32–277 (MVDRALGAKR…DLIKREKGFK (246 aa)) are cytoplasmic. The J domain maps to 211 to 277 (DACKVLGVNS…DLIKREKGFK (67 aa)).

Homodimer.

It localises to the cell inner membrane. In terms of biological role, regulatory DnaK co-chaperone. Direct interaction between DnaK and DjlA is needed for the induction of the wcaABCDE operon, involved in the synthesis of a colanic acid polysaccharide capsule, possibly through activation of the RcsB/RcsC phosphotransfer signaling pathway. The colanic acid capsule may help the bacterium survive conditions outside the host. In Yersinia pestis, this protein is Co-chaperone protein DjlA.